A 682-amino-acid polypeptide reads, in one-letter code: Inactive protein-arginine deiminase type-6 (682 aa).

A phosphoserine mark is found at Ser2 and Ser434.

Belongs to the protein arginine deiminase family. Homodimers. Associates with alpha-tubulin. Phosphorylation at Ser-2, possibly by RSK-type kinases, and Ser-434 creates binding sites for 14-3-3 proteins. In terms of tissue distribution, expressed at very high levels in oocytes. Weakly expressed in testis. Expressed in primordial, primary, secondary and Graafian follicles, and in immature oocytes, mature eggs and blastocyst (at protein level).

The protein localises to the cytoplasm. The protein resides in the nucleus. It localises to the cytoplasmic vesicle. It is found in the secretory vesicle. Its subcellular location is the cortical granule. Its function is as follows. Structural constituent of cytoplasmic lattices, which plays a key role in early embryonic development. Cytoplasmic lattices consist in fibrous structures found in the cytoplasm of oocytes and preimplantation embryos. They are required to store maternal proteins critical for embryonic development, such as ribosomal proteins and proteins that control epigenetic reprogramming of the preimplantation embryo, and prevent their degradation or activation. In contrast to other members of the family, does not show protein-arginine deiminase activity due to its inability to bind Ca(2+). This Mus musculus (Mouse) protein is Inactive protein-arginine deiminase type-6.